The following is a 289-amino-acid chain: Protease HtpX (289 aa).

Helical transmembrane passes span 7–27 and 38–58; these read LFLL…NIIF and GGIL…SLFM. Residue His-144 participates in Zn(2+) binding. Residue Glu-145 is part of the active site. His-148 is a Zn(2+) binding site. 2 helical membrane passes run 155–175 and 194–214; these read VTMT…SRII and LVFW…ATMI. A Zn(2+)-binding site is contributed by Glu-223.

This sequence belongs to the peptidase M48B family. Requires Zn(2+) as cofactor.

It is found in the cell inner membrane. This chain is Protease HtpX, found in Actinobacillus pleuropneumoniae serotype 5b (strain L20).